Reading from the N-terminus, the 187-residue chain is Elongation factor P (187 aa).

It belongs to the elongation factor P family.

Its subcellular location is the cytoplasm. It functions in the pathway protein biosynthesis; polypeptide chain elongation. In terms of biological role, involved in peptide bond synthesis. Stimulates efficient translation and peptide-bond synthesis on native or reconstituted 70S ribosomes in vitro. Probably functions indirectly by altering the affinity of the ribosome for aminoacyl-tRNA, thus increasing their reactivity as acceptors for peptidyl transferase. The sequence is that of Elongation factor P from Mycoplasmopsis pulmonis (strain UAB CTIP) (Mycoplasma pulmonis).